The primary structure comprises 951 residues: Coiled-coil and C2 domain-containing protein 1A (951 aa).

Disordered regions lie at residues 80–139 (CMRD…LETT), 185–266 (AIDE…RQRD), 306–346 (VDLS…PPPR), and 437–491 (NQDE…TRAQ). Acidic residues predominate over residues 84–104 (PDEDEEEGTDEDDLEADDDLL). Phosphothreonine occurs at positions 92, 204, and 206. Low complexity predominate over residues 201–210 (PASTPTYSPA). Ser208 is modified (phosphoserine; by CDK1). Residues Ser253 and Ser324 each carry the phosphoserine modification. The span at 311-333 (LPPPPDQLPPDPPSPPSQPPTPA) shows a compositional bias: pro residues. Residues 346-392 (RTLLEALEQRMERYQVAAAQAKSKGDQRKARMHERIVKQYQDAIRAH) are a coiled coil. Ser455 carries the post-translational modification Phosphoserine. Low complexity predominate over residues 475 to 488 (SAPTAKAPPKATST). Residues 484-517 (KATSTRAQQQLAFLEGRKKQLLQAALRAKQKNDV) are a coiled coil. The C2 domain maps to 637–771 (RFEQRTFSVI…EIACEVREIL (135 aa)). The interval 818-841 (TQVAGPKGKAPPVPAPARESGNRS) is disordered.

This sequence belongs to the CC2D1 family. In terms of processing, phosphorylation on Ser-208 by CDK1 promotes spindle pole localization and association with SCC1/RAD21.

The protein localises to the cytoplasm. The protein resides in the nucleus. It is found in the cytoskeleton. It localises to the microtubule organizing center. Its subcellular location is the centrosome. Functionally, transcription factor that binds specifically to the DRE (dual repressor element) and represses HTR1A gene transcription in neuronal cells. The combination of calcium and ATP specifically inactivates the binding with FRE. May play a role in the altered regulation of HTR1A associated with anxiety and major depression. Mediates HDAC-independent repression of HTR1A promoter in neuronal cell. Performs essential function in controlling functional maturation of synapses. Plays distinct roles depending on its localization. When cytoplasmic, acts as a scaffold protein in the PI3K/PDK1/AKT pathway. Repressor of HTR1A when nuclear. In the centrosome, regulates spindle pole localization of the cohesin subunit SCC1/RAD21, thereby mediating centriole cohesion during mitosis. This is Coiled-coil and C2 domain-containing protein 1A (CC2D1A) from Homo sapiens (Human).